The primary structure comprises 60 residues: MDCACATGGSCSCAGSCKCENCKCTSCKKSCCSCCPSECEKCGQGCVCKGGSSEKCSCCN.

The tract at residues 1–28 (MDCACATGGSCSCAGSCKCENCKCTSCK) is beta. The a divalent metal cation site is built by Cys-3, Cys-5, Cys-11, Cys-13, Cys-17, Cys-19, Cys-22, Cys-24, Cys-27, Cys-31, Cys-32, Cys-34, Cys-35, Cys-39, Cys-42, Cys-46, Cys-48, Cys-56, Cys-58, and Cys-59. The tract at residues 29 to 60 (KSCCSCCPSECEKCGQGCVCKGGSSEKCSCCN) is alpha.

It belongs to the metallothionein superfamily. Type 1 family.

In terms of biological role, metallothioneins have a high content of cysteine residues that bind various heavy metals. The polypeptide is Metallothionein (MT-A) (Ambystoma mexicanum (Axolotl)).